The sequence spans 341 residues: Pectate trisaccharide-lyase (341 aa).

The first 27 residues, 1–27, serve as a signal peptide directing secretion; the sequence is MKKLISIIFIFVLGVVGSLTAAVSAEA. A propeptide spanning residues 28–39 is cleaved from the precursor; sequence ASALNSGKVNPL. PbH1 repeat units lie at residues 131–156 and 158–186; these read ANNIIIRNLKIHEVASGDKDAIGIEG and SKNIWVDHNELYHSLNVDKDYYDGLFDVK. 3 residues coordinate Ca(2+): Asp-150, Asp-180, and Asp-184. Residue Arg-233 is part of the active site. 2 PbH1 repeats span residues 262 to 283 and 287 to 322; these read GARIRIENNLFENAKDPIVSWY and PGYWHVSNNKFVNSRGSMPTTSTTTYNPPYSYSLDN.

The protein belongs to the polysaccharide lyase 1 family. The cofactor is Ca(2+).

Its subcellular location is the secreted. It catalyses the reaction eliminative cleavage of unsaturated trigalacturonate as the major product from the reducing end of polygalacturonic acid/pectate.. Cleaves unsaturated oligo-galacturonides from pectin. The major product is trigalacturonate; digalacturonate and tetragalacturonate are also produced. Activity on methylated pectins decreases with an increasing degree of methylation. The protein is Pectate trisaccharide-lyase of Bacillus licheniformis (strain ATCC 14580 / DSM 13 / JCM 2505 / CCUG 7422 / NBRC 12200 / NCIMB 9375 / NCTC 10341 / NRRL NRS-1264 / Gibson 46).